The chain runs to 573 residues: Arginine--tRNA ligase (573 aa).

Residues 122-132 (PNLAKEMHVGH) carry the 'HIGH' region motif.

The protein belongs to the class-I aminoacyl-tRNA synthetase family. Monomer.

Its subcellular location is the cytoplasm. The enzyme catalyses tRNA(Arg) + L-arginine + ATP = L-arginyl-tRNA(Arg) + AMP + diphosphate. The sequence is that of Arginine--tRNA ligase from Laribacter hongkongensis (strain HLHK9).